The sequence spans 72 residues: U1-sicaritoxin-Sdo1a (72 aa).

The first 24 residues, 1 to 24 (MMKKFTCFLLCATILCAIFCVSVA), serve as a signal peptide directing secretion. The propeptide occupies 25–41 (EKFHKMKSDIERDETPM). Intrachain disulfides connect Cys-43/Cys-61, Cys-50/Cys-64, and Cys-60/Cys-69.

As to expression, expressed by the venom gland.

The protein resides in the secreted. This chain is U1-sicaritoxin-Sdo1a, found in Hexophthalma dolichocephala (Afrotropical spider).